Reading from the N-terminus, the 493-residue chain is Lysine--tRNA ligase (493 aa).

Mg(2+) contacts are provided by E403 and E410.

This sequence belongs to the class-II aminoacyl-tRNA synthetase family. In terms of assembly, homodimer. Mg(2+) is required as a cofactor.

The protein localises to the cytoplasm. It carries out the reaction tRNA(Lys) + L-lysine + ATP = L-lysyl-tRNA(Lys) + AMP + diphosphate. The protein is Lysine--tRNA ligase of Wigglesworthia glossinidia brevipalpis.